A 289-amino-acid chain; its full sequence is Probable endonuclease 4 (289 aa).

Zn(2+)-binding residues include H75, H115, E153, D187, H190, H224, D237, H239, and E269.

Belongs to the AP endonuclease 2 family. Zn(2+) serves as cofactor.

The catalysed reaction is Endonucleolytic cleavage to 5'-phosphooligonucleotide end-products.. Its function is as follows. Endonuclease IV plays a role in DNA repair. It cleaves phosphodiester bonds at apurinic or apyrimidinic (AP) sites, generating a 3'-hydroxyl group and a 5'-terminal sugar phosphate. This Chlamydia caviae (strain ATCC VR-813 / DSM 19441 / 03DC25 / GPIC) (Chlamydophila caviae) protein is Probable endonuclease 4.